A 699-amino-acid chain; its full sequence is PTS system glucose-specific EIICBA component (699 aa).

In terms of domain architecture, PTS EIIC type-1 spans lysine 3–aspartate 424. Transmembrane regions (helical) follow at residues leucine 16–methionine 36, isoleucine 66–glycine 86, valine 89–leucine 109, isoleucine 139–leucine 159, phenylalanine 180–tryptophan 200, leucine 233–tyrosine 253, phenylalanine 283–tyrosine 303, leucine 313–proline 333, phenylalanine 338–methionine 358, valine 365–proline 385, and threonine 388–phenylalanine 408. The PTS EIIB type-1 domain occupies glycine 439–arginine 520. The Phosphocysteine intermediate; for EIIB activity role is filled by cysteine 461. The 105-residue stretch at aspartate 568–asparagine 672 folds into the PTS EIIA type-1 domain. The active-site Tele-phosphohistidine intermediate; for EIIA activity is histidine 620.

The protein resides in the cell membrane. It carries out the reaction N(pros)-phospho-L-histidyl-[protein] + D-glucose(out) = D-glucose 6-phosphate(in) + L-histidyl-[protein]. The catalysed reaction is D-glucosamine(out) + N(pros)-phospho-L-histidyl-[protein] = D-glucosamine 6-phosphate(in) + L-histidyl-[protein]. In terms of biological role, the phosphoenolpyruvate-dependent sugar phosphotransferase system (sugar PTS), a major carbohydrate active transport system, catalyzes the phosphorylation of incoming sugar substrates concomitantly with their translocation across the cell membrane. This system is involved in glucose transport. The system can also transport glucosamine. In addition, plays an important role in the phosphorylation of EIIA-deficient PTS transporters. The EIIA domain can transfer a phosphoryl group to EIIA-deficient PTS transporters, enabling growth with maltose, N-acetylglucosamine, sucrose or trehalose as the sole carbon source. This chain is PTS system glucose-specific EIICBA component (ptsG), found in Bacillus subtilis (strain 168).